Reading from the N-terminus, the 482-residue chain is Potential E3 ubiquitin-protein ligase ariadne-2 (482 aa).

Residues 125–334 (AKGYCSVCAM…SEYYECSRYK (210 aa)) are TRIAD supradomain. Zn(2+) contacts are provided by cysteine 129, cysteine 132, cysteine 145, histidine 147, cysteine 150, cysteine 153, cysteine 172, cysteine 177, cysteine 218, cysteine 223, cysteine 239, cysteine 242, cysteine 247, cysteine 250, histidine 255, cysteine 260, cysteine 287, and cysteine 290. The segment at 129-177 (CSVCAMDGYTELPHLTCGHCFCEHCWKSHVESRLSEGVASRIECMESEC) adopts an RING-type 1 zinc-finger fold. The IBR-type zinc finger occupies 198 to 260 (LKYERFLLRD…GADYHAPTSC (63 aa)). The segment at 287-316 (CPQCHSCIEKAGGCNHIQCTRCRHHFCWMC) adopts an RING-type 2; atypical zinc-finger fold. Cysteine 300 is a catalytic residue. The Zn(2+) site is built by cysteine 305, cysteine 308, cysteine 313, cysteine 316, histidine 323, and cysteine 330. Residues 433 to 459 (FEYQQAQLEKEVEELAWAVERADGTAR) are a coiled coil.

This sequence belongs to the RBR family. Ariadne subfamily.

It is found in the nucleus. It catalyses the reaction [E2 ubiquitin-conjugating enzyme]-S-ubiquitinyl-L-cysteine + [acceptor protein]-L-lysine = [E2 ubiquitin-conjugating enzyme]-L-cysteine + [acceptor protein]-N(6)-ubiquitinyl-L-lysine.. In terms of biological role, might act as an E3 ubiquitin-protein ligase, or as part of E3 complex, which accepts ubiquitin from specific E2 ubiquitin-conjugating enzymes, such as UBC-2/UBE2L3, and then transfers it to substrates. The chain is Potential E3 ubiquitin-protein ligase ariadne-2 from Caenorhabditis elegans.